The chain runs to 544 residues: Chaperonin GroEL (544 aa).

ATP contacts are provided by residues 30–33 (TLGP), Lys51, 87–91 (DGTTT), Gly415, 481–483 (DAL), and Asp497.

The protein belongs to the chaperonin (HSP60) family. In terms of assembly, forms a cylinder of 14 subunits composed of two heptameric rings stacked back-to-back. Interacts with the co-chaperonin GroES.

The protein localises to the cytoplasm. It catalyses the reaction ATP + H2O + a folded polypeptide = ADP + phosphate + an unfolded polypeptide.. Its function is as follows. Together with its co-chaperonin GroES, plays an essential role in assisting protein folding. The GroEL-GroES system forms a nano-cage that allows encapsulation of the non-native substrate proteins and provides a physical environment optimized to promote and accelerate protein folding. In Chlamydia felis (strain Fe/C-56) (Chlamydophila felis), this protein is Chaperonin GroEL.